We begin with the raw amino-acid sequence, 64 residues long: Large ribosomal subunit protein bL33 (64 aa).

It belongs to the bacterial ribosomal protein bL33 family.

This is Large ribosomal subunit protein bL33 from Synechococcus sp. (strain JA-3-3Ab) (Cyanobacteria bacterium Yellowstone A-Prime).